Reading from the N-terminus, the 396-residue chain is Elongation factor Tu (396 aa).

The tr-type G domain maps to 10–205 (KPHVNIGTIG…AVDESIPDPV (196 aa)). The segment at 19-26 (GHVDHGKT) is G1. GTP is bound at residue 19 to 26 (GHVDHGKT). Residue Thr26 participates in Mg(2+) binding. The G2 stretch occupies residues 62–66 (GITIN). A G3 region spans residues 83–86 (DAPG). GTP-binding positions include 83 to 87 (DAPGH) and 138 to 141 (NKAD). The G4 stretch occupies residues 138–141 (NKAD). The G5 stretch occupies residues 175-177 (SAL).

The protein belongs to the TRAFAC class translation factor GTPase superfamily. Classic translation factor GTPase family. EF-Tu/EF-1A subfamily. In terms of assembly, monomer.

The protein localises to the cytoplasm. It catalyses the reaction GTP + H2O = GDP + phosphate + H(+). In terms of biological role, GTP hydrolase that promotes the GTP-dependent binding of aminoacyl-tRNA to the A-site of ribosomes during protein biosynthesis. This chain is Elongation factor Tu, found in Mycolicibacterium gilvum (strain PYR-GCK) (Mycobacterium gilvum (strain PYR-GCK)).